Reading from the N-terminus, the 345-residue chain is Phosphoribosylformylglycinamidine cyclo-ligase (345 aa).

It belongs to the AIR synthase family.

The protein resides in the cytoplasm. The enzyme catalyses 2-formamido-N(1)-(5-O-phospho-beta-D-ribosyl)acetamidine + ATP = 5-amino-1-(5-phospho-beta-D-ribosyl)imidazole + ADP + phosphate + H(+). It functions in the pathway purine metabolism; IMP biosynthesis via de novo pathway; 5-amino-1-(5-phospho-D-ribosyl)imidazole from N(2)-formyl-N(1)-(5-phospho-D-ribosyl)glycinamide: step 2/2. The chain is Phosphoribosylformylglycinamidine cyclo-ligase from Ligilactobacillus salivarius (strain UCC118) (Lactobacillus salivarius).